The chain runs to 432 residues: MSELKDCPLQFHDFKSVDHLKVCPRYTAVLARSEDDGIGIEELDTLQLELETLLSSASRRLRVLEAETQILTDWQDKKGDRRFLKLGRDHELGAPPKHGKPKKQKLEGKAGHGPGPGPGRPKSKNLQPKIQEYEFTDDPIDVPRIPKNDAPNRFWASVEPYCADITSEEVRTLEELLKPPEDEAEHYKIPPLGKHYSQRWAQEDLLEEQKDGARAAAVADKKKGLMGPLTELDTKDVDALLKKSEAQHEQPEDGCPFGALTQRLLQALVEENIISPMEDSPIPDMSGKESGADGASTSPRNQNKPFSVPHTKSLESRIKEELIAQGLLESEDRPAEDSEDEVLAELRKRQAELKALSAHNRTKKHDLLRLAKEEVSRQELRQRVRMADNEVMDAFRKIMAARQKKRTPTKKEKDQAWKTLKERESILKLLDG.

A Glycyl lysine isopeptide (Lys-Gly) (interchain with G-Cter in SUMO2) cross-link involves residue Lys-21. The stretch at 40–69 forms a coiled coil; that stretch reads IEELDTLQLELETLLSSASRRLRVLEAETQ. Residues 87–126 are disordered; sequence GRDHELGAPPKHGKPKKQKLEGKAGHGPGPGPGRPKSKNL. A Glycyl lysine isopeptide (Lys-Gly) (interchain with G-Cter in SUMO2) cross-link involves residue Lys-129. The interval 272 to 319 is disordered; sequence NIISPMEDSPIPDMSGKESGADGASTSPRNQNKPFSVPHTKSLESRIK. 2 positions are modified to phosphoserine: Ser-280 and Ser-298. Over residues 295 to 305 the composition is skewed to polar residues; it reads ASTSPRNQNKP. The stretch at 367–407 forms a coiled coil; it reads LLRLAKEEVSRQELRQRVRMADNEVMDAFRKIMAARQKKRT. The residue at position 418 (Lys-418) is an N6-acetyllysine.

The protein belongs to the NGG1 family. The PCAF complex is composed of a number of TBP-associated factors (TAFS), such as TAF5, TAF5L, TAF6, TAF6L, TAF9, TAF10 and TAF12, PCAF, and also PCAF-associated factors (PAFs), such as TADA2L/ADA2, TADA3L/ADA3 and SPT3. Interacts directly with TADA2L and PCAF and also with the high-risk HPV oncoprotein E6. Component of the STAGA transcription coactivator-HAT complex, at least composed of SUPT3H, GCN5L2, TAF5L, TAF6L, SUPT7L, TADA3L, TAD1L, TAF10, TAF12, TRRAP and TAF9. Component of the TFTC-HAT complex. Component of the ADA2A-containing complex (ATAC), composed of KAT14, KAT2A, TADA2L, TADA3L, ZZ3, MBIP, WDR5, YEATS2, CCDC101 and DR1. In terms of tissue distribution, ubiquitously expressed.

It localises to the nucleus. Functionally, functions as a component of the PCAF complex. The PCAF complex is capable of efficiently acetylating histones in a nucleosomal context. The PCAF complex could be considered as the human version of the yeast SAGA complex. Also known as a coactivator for p53/TP53-dependent transcriptional activation. Component of the ATAC complex, a complex with histone acetyltransferase activity on histones H3 and H4. The chain is Transcriptional adapter 3 (TADA3) from Homo sapiens (Human).